Here is a 788-residue protein sequence, read N- to C-terminus: E3 ubiquitin-protein ligase SspH2 (788 aa).

The segment at 1-481 (MPFHIGSGCL…PGYSGPIIRF (481 aa)) is interaction with host membrane and with target proteins. LRR repeat units lie at residues 223–242 (HITT…ALPP), 243–264 (ELRT…PPGL), 265–282 (LELS…ALPS), 283–302 (GLCK…VLPP), 303–324 (GLQE…PSEL), 325–342 (CKLW…MLPS), 343–364 (GLQE…PSEL), 365–382 (YKLW…ALPS), 383–404 (GLKE…PSEL), 405–422 (KELM…MLPS), 423–445 (GLLS…IHLS), and 446–466 (SETT…QALR). The tract at residues 482–491 (DMAGASAPRE) is linker. An E3 ubiquitin-protein ligase catalytic domain region spans residues 492 to 788 (TRALHLAAAD…SYLNVQWRRN (297 aa)). The NEL domain maps to 494–788 (ALHLAAADWL…SYLNVQWRRN (295 aa)). Catalysis depends on Cys-580, which acts as the Glycyl thioester intermediate.

The protein belongs to the LRR-containing bacterial E3 ligase family. In terms of processing, ubiquitinated in the presence of host E1 ubiquitin-activating enzyme UBA1, E2 ubiquitin-conjugating enzyme UBE2D2 and ubiquitin.

The protein resides in the secreted. Its subcellular location is the host cytoplasm. The protein localises to the host apical cell membrane. The enzyme catalyses S-ubiquitinyl-[E2 ubiquitin-conjugating enzyme]-L-cysteine + [acceptor protein]-L-lysine = [E2 ubiquitin-conjugating enzyme]-L-cysteine + N(6)-ubiquitinyl-[acceptor protein]-L-lysine.. Its activity is regulated as follows. Exists in an autoinhibited state in the absence of substrate protein, due to interactions of the leucine-rich repeat domain with the catalytic domain. Is activated upon binding to a substrate protein. Its function is as follows. Effector proteins function to alter host cell physiology and promote bacterial survival in host tissues. This protein is an E3 ubiquitin ligase that interferes with host's ubiquitination pathway. This Salmonella typhimurium (strain LT2 / SGSC1412 / ATCC 700720) protein is E3 ubiquitin-protein ligase SspH2 (sspH2).